We begin with the raw amino-acid sequence, 387 residues long: Deoxyguanosinetriphosphate triphosphohydrolase-like protein (387 aa).

The HD domain occupies 78-209 (RLTHSLEVAQ…ANLADEVAYN (132 aa)).

This sequence belongs to the dGTPase family. Type 2 subfamily.

The sequence is that of Deoxyguanosinetriphosphate triphosphohydrolase-like protein from Ralstonia nicotianae (strain ATCC BAA-1114 / GMI1000) (Ralstonia solanacearum).